A 398-amino-acid polypeptide reads, in one-letter code: 1-deoxy-D-xylulose 5-phosphate reductoisomerase (398 aa).

NADPH contacts are provided by T11, G12, S13, I14, and N125. 1-deoxy-D-xylulose 5-phosphate is bound at residue K126. E127 is a binding site for NADPH. D151 is a Mn(2+) binding site. S152, E153, S186, and H209 together coordinate 1-deoxy-D-xylulose 5-phosphate. A Mn(2+)-binding site is contributed by E153. G215 serves as a coordination point for NADPH. 1-deoxy-D-xylulose 5-phosphate-binding residues include S222, N227, K228, and E231. E231 contributes to the Mn(2+) binding site.

This sequence belongs to the DXR family. Requires Mg(2+) as cofactor. Mn(2+) serves as cofactor.

The enzyme catalyses 2-C-methyl-D-erythritol 4-phosphate + NADP(+) = 1-deoxy-D-xylulose 5-phosphate + NADPH + H(+). It functions in the pathway isoprenoid biosynthesis; isopentenyl diphosphate biosynthesis via DXP pathway; isopentenyl diphosphate from 1-deoxy-D-xylulose 5-phosphate: step 1/6. Functionally, catalyzes the NADPH-dependent rearrangement and reduction of 1-deoxy-D-xylulose-5-phosphate (DXP) to 2-C-methyl-D-erythritol 4-phosphate (MEP). The protein is 1-deoxy-D-xylulose 5-phosphate reductoisomerase of Acinetobacter baumannii (strain ATCC 17978 / DSM 105126 / CIP 53.77 / LMG 1025 / NCDC KC755 / 5377).